We begin with the raw amino-acid sequence, 242 residues long: Endoglucanase (242 aa).

The first 21 residues, 1 to 21 (MQVIVLPLVFLATFATSGSLA), serve as a signal peptide directing secretion. The active-site Nucleophile is Asp-47. N-linked (GlcNAc...) asparagine glycosylation is found at Asn-79, Asn-103, and Asn-217.

It belongs to the glycosyl hydrolase 45 (cellulase K) family. As to expression, expressed in larval carcasses and gut, and adult gut.

The protein localises to the secreted. It catalyses the reaction Endohydrolysis of (1-&gt;4)-beta-D-glucosidic linkages in cellulose, lichenin and cereal beta-D-glucans.. This is Endoglucanase from Phaedon cochleariae (Mustard beetle).